The following is a 236-amino-acid chain: Small ribosomal subunit protein uS2c (236 aa).

The protein belongs to the universal ribosomal protein uS2 family.

Its subcellular location is the plastid. The protein localises to the chloroplast. The sequence is that of Small ribosomal subunit protein uS2c (rps2) from Coffea arabica (Arabian coffee).